The sequence spans 139 residues: MPIHLEIVTAERVVLSDDVDMINAPTKDGRVGILPRHAPLLTILEVGELDIVKDGVTTPFAISGGFMEVLPNRVTILADTAERADEIDEARAEAARRAAEQRIAERKSAQDLALAEAELRRALVQLKVAQLKKIRRERD.

This sequence belongs to the ATPase epsilon chain family. As to quaternary structure, F-type ATPases have 2 components, CF(1) - the catalytic core - and CF(0) - the membrane proton channel. CF(1) has five subunits: alpha(3), beta(3), gamma(1), delta(1), epsilon(1). CF(0) has three main subunits: a, b and c.

The protein localises to the cell membrane. In terms of biological role, produces ATP from ADP in the presence of a proton gradient across the membrane. In Roseiflexus sp. (strain RS-1), this protein is ATP synthase epsilon chain.